The chain runs to 98 residues: A-type ATP synthase subunit F (98 aa).

Belongs to the V-ATPase F subunit family. In terms of assembly, the A-type ATPase is composed of subunits A(3), B(3), C, D, E(1 or 2), F, H(2), I and K(x).

The protein localises to the cell membrane. Its function is as follows. Component of the A-type ATP synthase that produces ATP from ADP in the presence of a proton gradient across the membrane. This Methanocaldococcus jannaschii (strain ATCC 43067 / DSM 2661 / JAL-1 / JCM 10045 / NBRC 100440) (Methanococcus jannaschii) protein is A-type ATP synthase subunit F.